The sequence spans 355 residues: 45 kDa calcium-binding protein (355 aa).

Residues 1–29 (MASRQGPLCGLAPCCLWLLGVILLMNASA) form the signal peptide. Residue asparagine 26 is glycosylated (N-linked (GlcNAc...) asparagine). 2 consecutive EF-hand domains span residues 91 to 126 (KSRR…KTAE) and 130 to 165 (EAVA…TKGH). Serine 92 bears the Phosphoserine mark. Ca(2+) is bound by residues aspartate 104, asparagine 106, aspartate 108, arginine 110, glutamate 115, aspartate 143, aspartate 145, aspartate 147, histidine 149, and glutamate 154. Phosphothreonine occurs at positions 186 and 210. EF-hand domains follow at residues 226–261 (MLQF…TVEN), 271–306 (WVRD…MNEF), and 307–342 (SALN…FTGS). Residues aspartate 239, aspartate 241, aspartate 243, lysine 245, and glutamate 250 each coordinate Ca(2+). Threonine 258 is modified (phosphothreonine). Positions 284, 286, and 288 each coordinate Ca(2+). Threonine 292 carries the post-translational modification Phosphothreonine. Residues glutamate 295, aspartate 320, asparagine 322, asparagine 324, tyrosine 326, and glutamate 331 each contribute to the Ca(2+) site. A necessary for intracellular retention in Golgi apparatus lumen region spans residues 302–355 (PMNEFSALNEAKQMIAIADENQNHYLEPEEVLKYSEFFTGSKLVDYARSVHEEF).

This sequence belongs to the CREC family.

Its subcellular location is the golgi apparatus lumen. Functionally, may regulate calcium-dependent activities in the endoplasmic reticulum lumen or post-ER compartment. This chain is 45 kDa calcium-binding protein (SDF4), found in Capra hircus (Goat).